Consider the following 2311-residue polypeptide: MKRHQFKSWIFEFREILREIKNSHYFLDSWIKFDSVGSFTHIFFHQERFMKLFDPRILSILLSRDSQDSTSNRYFTIKGVVLLVVAVLISRINNRKMVERKNLYLMGLLPIPILPIRMNSIGHRNETLEESFWSSNINRLIVSLLYLPKGKKISESCFMDPRESTWVLPINQKCIMPESNRGSRWWSNRIGKKRDSSCKISNETVAGIEISFKEKDSKYLEFLFLSYTDDRIRKDPDWELFDRLSLRKKRNIINLNSGQLFEILGKDLVCYLMSAFREKRPIEGEGFFKQQGAEATIQSNDIEHVSHLFLFSRNKWGISLQNCAQFHMWQFRQDLFVSWGKNRHESDFLRNVSRENLIWLDNVWLVNKDRFFSKVRNVSSNIQYDSTGSIFVQVTDSSQLKGSSDQSRDCFDSIRNEDSEYHKLIDQTEIQQLKERSILWDPSFSQTERTEIESDRFPKCLFGSSSMSPLFTEREKPINNHLLPEEEEIEEFLGNPTRSIRSFFSDKWSELHLGSNPTERSTRDQKFLKKKQDVSFVPSRRSENKEMVDIFKIITYLQNTVSIHPISSDPGCDMVVPKDEPDMDSSNKISFLNKNPFLDLFHLFYDRNNGGYTLRHDFESEERFQEMADLFTLSITEPDLVYHRGFAFSIDSYGLDQKKLLNRVFNSRDESKKKSLLVLPPLFYEENESFYRRIRKKSVRIYCGNYLEDPKLKIVVFASNNIMEAVNKYRLIRNMIQIQYNTYGYIRNVSNRFFLMNRSDRNYEYGIQKDQIGNDTLNHITIMKYTINQHLSNLKKSQKKWFDPLFSRTERSINLDPDAYRYKWSNGNNNFQEHLEHFVSEQGNHFQVVFDRLGINQYSIDWSKAIDKQDFSKSLRFFLSKALLFFSKSLRFFLSKTLPFFFVSIGNIPIHRSEIHIYELKGTNDQLCNQLLESIGVQIVHLNKLKPFLLDDHDTSQRPKFLINGRTILPFLFNKIPKWMIDSFHTRNNRRKSFDNTDSYFSMISHDRDNWLNPVKPFHRSSLISSFYKANRLRFLNNPHHFWFYCNKGFPFYVEKTCINNYDLTYGQFLNILFIRNKIFSLCVGKGKKTHIFLEREAILPIDSQVSDIFISNDFPKSGDETYNLYKSFHFPIRPDPFVRRAIYSIADISATPLTEEQIVHFERTSCQPFSDMNLSDSEGKNSHQYLSFNSNMGLIHTPCSEKYLPSGKRKKQSLCLKKCVDKQQMYRTFQRDSALSNLSKWNLLQTYMPWFLTSTGCKYLNFTLLDAFSDSLPILSSSPKFVSIFHDIMHGSDISWPIRQKKWWAILSQWTPISEISSKCLQNLLLSEETIHRNNESPVPLIWTHLRSTNAREFLYSILFFLLVAGYLVRIHLLFVSRASSELQTELEKIKSLMIPSYMIELRKLLYRYPTSELNSFWLKNLFRVALEQLGDSLEEIRGYASDGNMLLGRGPAYGVKSIRSKNKYLNINLIDLISIIPNPVNRITFSRNTRHLSRTSKEIYALIRKRKNVNGDWIDDKIESWVANSDSIDDDEREFLVQFSTLTTEKRIDQILLSLTHSDHLSKNDFGYQMIEQPGSIYLRYLVDIHKKSLMNYEFNRSCLAERRIFLAHYQTITYSQTSCGANSFHFRSHGKPFSLRLALSPSRGILVIGSIGTGRSYLVKYLATNSYVPFITVFPNKFLDDKPKGYLIDDIDDSNDIDLDDTDDIDIEDSDDIDNDLETELLTMTNVLTMYMTSKIDRFDITPQFELAKAMSPCIIWIPNIHDLYVNESNYLSLGLLVNYLSRDCERSSTRNILVIASTHIPQKVDPALIAPNKSNTCIKIRRLLIPQQRKHFFILSYTRGFHLEKKMFHTNGFGSITVGSNARDLVALINEALSISITQKKSIIETNTIRSALHRQTWDLRSQVRSVQDHGILFYQIGRAVAQNVLLSNCPIDPISIYMKKKSCKERDSYLYKWYFELGTSIKKLTILLYLLSCSAGSVAQDLWSPSGPDEKNGITSFGFVENDSDLVHGLLEVEGALVGFSRKEKDCSQFDNNRVTLLLRSEPRNPLDMMQNGSCSIVDQRFLYEKYESEFEEGEGALDPQQIEEDLLNHIVWAPRIWRPCGNLFDCIERTNELGFPYWARSFRDKRIIFHKENELQQKDSEFLQSGTMQYQTRDRSSKEQGFFRISQFIWDPADPFFFLFKDQPFVSVFSRREFFADEEMSKGLITSQKNPPTSIYKRWFIKNTQEKHFELLIHRQRWLRTNSSLSNRSFCSNTLSESYQYLSNLFLSNGRLLDQMTKTLLRKRWLFPDEMKHLIDVTGKRFPIP.

Glycine 1652–serine 1659 provides a ligand contact to ATP.

It belongs to the Ycf2 family.

The protein localises to the plastid. It localises to the chloroplast stroma. Its function is as follows. Probable ATPase of unknown function. Its presence in a non-photosynthetic plant (Epifagus virginiana) and experiments in tobacco indicate that it has an essential function which is probably not related to photosynthesis. The polypeptide is Protein Ycf2 (Lemna minor (Common duckweed)).